The sequence spans 586 residues: Major facilitator superfamily domain-containing protein 6-like (586 aa).

The next 2 membrane-spanning stretches (helical) occupy residues 50 to 70 and 78 to 98; these read ILMG…AFLA and MFLT…VLVP. The disordered stretch occupies residues 218–237; sequence GPVNLSKPQGDTQTPDHSSK. Residues 223–237 show a composition bias toward polar residues; that stretch reads SKPQGDTQTPDHSSK. 9 helical membrane-spanning segments follow: residues 240–260, 284–304, 318–338, 365–385, 397–417, 428–448, 454–474, 494–514, and 519–538; these read PWTF…AAPL, LWVW…ALVG, VIYF…STAF, LILL…VQDF, ELVM…FHPF, VGVL…YAFI, VLPV…AVGA, GHFY…VVLH, and VLYE…FLSI.

This sequence belongs to the major facilitator superfamily. MFSD6 family.

The protein resides in the membrane. This chain is Major facilitator superfamily domain-containing protein 6-like (Mfsd6l), found in Mus musculus (Mouse).